Reading from the N-terminus, the 977-residue chain is Fc receptor-like protein 5 (977 aa).

Positions 1-15 are cleaved as a signal peptide; sequence MLLWVILLVLAPVSG. Over 16-851 the chain is Extracellular; sequence QFARTPRPII…ANRSGPFATG (836 aa). 8 consecutive Ig-like C2-type domains span residues 23–101, 188–271, 287–374, 380–463, 473–556, 566–651, 659–744, and 752–834; these read PIIF…LDFS, PFTR…SVIS, PVLT…LSVT, PVLN…KAVS, PVLT…EVVS, PILT…ISLS, PILT…VTLK, and PVLT…ETVT. Intrachain disulfides connect C44–C85, C211–C260, and C308–C355. A glycan (N-linked (GlcNAc...) asparagine) is linked at N383. 5 disulfides stabilise this stretch: C401-C448, C494-C541, C587-C634, C680-C727, and C773-C819. The helical transmembrane segment at 852-872 threads the bilayer; it reads VAGGLLSIAGLAAGALLLYCW. Topologically, residues 873–977 are cytoplasmic; that stretch reads LSRKAGRKPA…LFLASSAPHR (105 aa). Positions 879–898 are disordered; that stretch reads RKPASDPARSPSDSDSQEPT. Residues 883-892 show a composition bias toward low complexity; it reads SDPARSPSDS. Short sequence motifs (ITIM motif) lie at residues 897-902, 910-915, 922-927, and 952-957; these read PTYHNV, PVYTNA, VVYSEV, and IIYSEV.

In terms of assembly, interacts with CR2. Interacts with CD19. As to expression, expressed in marginal zone B-cells, immunoblasts, tonsillar germinal center centrocytes and in the intraepithelial and interfollicular regions of the tonsil. Expressed in many lymphoma cell lines and on hairy cell leukemia cells. Isoform 1, isoform 3, isoform 4 and isoform 5 are detected in lymph node, spleen, bone marrow, and small intestine with preponderance of isoform 3. Expressed in mature and memory B-cells and down-regulated in germinal center cells (at protein level).

Its subcellular location is the cell membrane. Functionally, plays an important role in B-cell response to antigen that acts both as a negative or positive coreceptor. Inhibits B-cell receptor (BCR) signaling in the absence of CR2 stimulation but engagement with CR2 and the BCR lead to a superior calcium response compared to CR2 and BCR costimulation. May be involved in B-cell development and differentiation in peripheral lymphoid organs and may be useful markers of B-cell stages. May have an immunoregulatory role in marginal zone B-cells. May play a role in fertilization. The protein is Fc receptor-like protein 5 (FCRL5) of Homo sapiens (Human).